Here is a 946-residue protein sequence, read N- to C-terminus: Protein RRC1 (946 aa).

2 disordered regions span residues 1-29 (MSSF…KAED) and 41-183 (SFQG…NLYV). Basic and acidic residues-rich tracts occupy residues 15–29 (KHRE…KAED), 62–75 (DKPK…KSKD), and 98–147 (KGKE…DRQG). Positions 179 to 260 (TNLYVGNLSP…YELKIGWGKA (82 aa)) constitute an RRM domain. The stretch at 329-372 (VIDTLALYVLDGECAFEQAIMERGRGNPLFKFMFELGSKEHTYY) is one SURP motif repeat. One can recognise a CID domain in the interval 437–582 (LTDPQRDEFE…GLRSTFLRSG (146 aa)). Positions 631-665 (LMNLPIAELERRCRHNGLSLVGGRVMMVTRLLSLE) constitute an SAP domain. Disordered stretches follow at residues 740–797 (ASKW…EQRQ) and 836–946 (EVDY…RGTR). The segment covering 757 to 767 (SSSSGSDNTGG) has biased composition (polar residues). 3 stretches are compositionally biased toward basic and acidic residues: residues 772 to 781 (ADGEDLKGND), 854 to 868 (IIER…QESS), and 886 to 946 (STRE…RGTR).

In terms of assembly, component of the SWAP1-SFPS-RRC1 splicing factor complex which modulates pre-mRNA splicing to promote photomorphogenesis. Interacts with SWAP1 in a light-independent manner. Expressed in leaves, inflorescence stems, roots, flower buds, open flowers and siliques.

The protein localises to the nucleus speckle. Its function is as follows. As a member of the SWAP1-SFPS-RRC1 splicing factor complex, modulates photomorphogenesis by regulating the gene expression and pre-messenger RNA (mRNA) alternative splicing of a large number of genes, including those involved in plant responses to light signaling. SR-like splicing factor required for phytochrome B (phyB) signal transduction and involved in phyB-dependent alternative splicing. This chain is Protein RRC1, found in Arabidopsis thaliana (Mouse-ear cress).